The chain runs to 175 residues: Cytochrome c homolog (175 aa).

Residues 1-8 (MSGKELNK) lie on the Cytoplasmic side of the membrane. The helical; Signal-anchor transmembrane segment at 9–29 (IVAAILFASLIAMMVGFVANI) threads the bilayer. The Periplasmic portion of the chain corresponds to 30-175 (LYKPTLELQH…LFLKTYVHDK (146 aa)). Residues Cys84, Cys87, His88, and Met150 each contribute to the heme c site.

The protein belongs to the cytochrome c family. Post-translationally, binds 1 heme c group covalently per subunit.

The protein resides in the cell membrane. May be involved in electron transfer from bc1 complex to aa3. The chain is Cytochrome c homolog (cycM) from Rickettsia felis (strain ATCC VR-1525 / URRWXCal2) (Rickettsia azadi).